Consider the following 223-residue polypeptide: UPF0441 protein YgiB (223 aa).

Residues 178 to 195 (TVPKTAMAPKPATTTTVT) are compositionally biased toward low complexity. Positions 178–223 (TVPKTAMAPKPATTTTVTRGGFGESVAKQSTMQRSATGTSSRSMGG) are disordered. The span at 204 to 223 (AKQSTMQRSATGTSSRSMGG) shows a compositional bias: polar residues.

It belongs to the UPF0441 family.

The chain is UPF0441 protein YgiB from Shigella boydii serotype 18 (strain CDC 3083-94 / BS512).